We begin with the raw amino-acid sequence, 394 residues long: Elongation factor Tu (394 aa).

Residues 10 to 204 (KPHVNVGTIG…ALDSYIPEPE (195 aa)) form the tr-type G domain. The segment at 19 to 26 (GHVDHGKT) is G1. 19–26 (GHVDHGKT) provides a ligand contact to GTP. T26 lines the Mg(2+) pocket. The segment at 60–64 (GITIS) is G2. The segment at 81 to 84 (DCPG) is G3. Residues 81–85 (DCPGH) and 136–139 (NKCD) each bind GTP. Residues 136 to 139 (NKCD) form a G4 region. Residues 174–176 (SAL) are G5.

This sequence belongs to the TRAFAC class translation factor GTPase superfamily. Classic translation factor GTPase family. EF-Tu/EF-1A subfamily. Monomer.

It is found in the cytoplasm. It catalyses the reaction GTP + H2O = GDP + phosphate + H(+). Its function is as follows. GTP hydrolase that promotes the GTP-dependent binding of aminoacyl-tRNA to the A-site of ribosomes during protein biosynthesis. The polypeptide is Elongation factor Tu (Alteromonas mediterranea (strain DSM 17117 / CIP 110805 / LMG 28347 / Deep ecotype)).